A 320-amino-acid chain; its full sequence is Cytochrome f (320 aa).

The N-terminal stretch at 1–35 (MQTRNNFSWIKEQITRSISVSLMIYIITRASISNA) is a signal peptide. Residues Tyr-36, Cys-56, Cys-59, and His-60 each coordinate heme. The chain crosses the membrane as a helical span at residues 286-306 (VQGLLFFLASVILAQIFLVLK).

This sequence belongs to the cytochrome f family. In terms of assembly, the 4 large subunits of the cytochrome b6-f complex are cytochrome b6, subunit IV (17 kDa polypeptide, petD), cytochrome f and the Rieske protein, while the 4 small subunits are PetG, PetL, PetM and PetN. The complex functions as a dimer. It depends on heme as a cofactor.

It is found in the plastid. It localises to the chloroplast thylakoid membrane. Component of the cytochrome b6-f complex, which mediates electron transfer between photosystem II (PSII) and photosystem I (PSI), cyclic electron flow around PSI, and state transitions. The sequence is that of Cytochrome f from Lactuca sativa (Garden lettuce).